Here is a 195-residue protein sequence, read N- to C-terminus: Probable GTP-binding protein EngB (195 aa).

The EngB-type G domain maps to 24 to 195 (GLSEVGLSGR…QIWNVIEKYL (172 aa)). Residues 32–39 (GRSNVGKS), 59–63 (GKTQT), 77–80 (DVPG), 144–147 (TKED), and 176–178 (YSS) each bind GTP. Serine 39 and threonine 61 together coordinate Mg(2+).

Belongs to the TRAFAC class TrmE-Era-EngA-EngB-Septin-like GTPase superfamily. EngB GTPase family. Mg(2+) serves as cofactor.

Functionally, necessary for normal cell division and for the maintenance of normal septation. In Staphylococcus saprophyticus subsp. saprophyticus (strain ATCC 15305 / DSM 20229 / NCIMB 8711 / NCTC 7292 / S-41), this protein is Probable GTP-binding protein EngB.